We begin with the raw amino-acid sequence, 88 residues long: Cell division topological specificity factor (88 aa).

It belongs to the MinE family.

In terms of biological role, prevents the cell division inhibition by proteins MinC and MinD at internal division sites while permitting inhibition at polar sites. This ensures cell division at the proper site by restricting the formation of a division septum at the midpoint of the long axis of the cell. This Carboxydothermus hydrogenoformans (strain ATCC BAA-161 / DSM 6008 / Z-2901) protein is Cell division topological specificity factor.